Here is a 385-residue protein sequence, read N- to C-terminus: Isocitrate dehydrogenase [NAD] subunit beta, mitochondrial (385 aa).

Residues 1-33 constitute a mitochondrion transit peptide; the sequence is MAALSRVRWLTRALVAAPNPGAWRSLCTSTVAQ. Lysine 199 carries the N6-acetyllysine modification.

It belongs to the isocitrate and isopropylmalate dehydrogenases family. In terms of assembly, heterooligomer of subunits alpha (IDH3A), beta (IDH3B), and gamma (IDH3G) in the apparent ratio of 2:1:1. The heterodimer containing one IDH3A and one IDH3B subunit and the heterodimer containing one IDH3A and one IDH3G subunit assemble into a heterotetramer (which contains two subunits of IDH3A, one of IDH3B and one of IDH3G) and further into the heterooctamer. Isoform A is predominant in heart muscle; also found in brain, kidney and liver. Isoform B is present in kidney and liver.

Its subcellular location is the mitochondrion. With respect to regulation, the heterotetramer and the heterodimer composed of IDH3A and IDH3G subunits can be allosterically activated by citrate (CIT) or/and ADP, and the two activators can act independently or synergistically. The heterodimer composed of IDH3A and IDH3B subunits cannot be allosterically regulated and the allosteric regulation of the heterotetramer is through the IDH3G subunit and not the IDH3B subunit. The IDH3G subunit contains the allosteric site which consists of a CIT-binding site and an ADP-binding site, and the binding of CIT and ADP causes conformational changes at the allosteric site which are transmitted to the active site in the catalytic subunit (IDH3A) through a cascade of conformational changes at the heterodimer interface, leading to stabilization of the isocitrate-binding at the active site and thus activation of the enzyme. ATP can activate the heterotetramer and the heterodimer composed of IDH3A and IDH3G subunits at low concentrations but inhibits their activities at high concentrations, whereas ATP exhibits only inhibitory effect on the heterodimer composed of IDH3A and IDH3B subunits. Functionally, plays a structural role to facilitate the assembly and ensure the full activity of the enzyme catalyzing the decarboxylation of isocitrate (ICT) into alpha-ketoglutarate. The heterodimer composed of the alpha (IDH3A) and beta (IDH3B) subunits and the heterodimer composed of the alpha (IDH3A) and gamma (IDH3G) subunits, have considerable basal activity but the full activity of the heterotetramer (containing two subunits of IDH3A, one of IDH3B and one of IDH3G) requires the assembly and cooperative function of both heterodimers. This chain is Isocitrate dehydrogenase [NAD] subunit beta, mitochondrial (IDH3B), found in Bos taurus (Bovine).